The primary structure comprises 22 residues: Conotoxin MIIIJ (22 aa).

Gln1 carries the post-translational modification Pyrrolidone carboxylic acid. Cystine bridges form between Cys3–Cys21, Cys4–Cys19, and Cys9–Cys22.

Belongs to the conotoxin M superfamily. As to expression, expressed by the venom duct.

The protein localises to the secreted. Functionally, probable competitive antagonist of fish muscle acetylcholine receptor. Inhibits postsynaptic nicotinic acetylcholine receptors (nAChRs) from fish (zebrafish and goldfish) and frogs (IC(50)=0.1 uM). Protects these receptors from block by alpha-bungarotoxin and alpha-conotoxin EI. Does not block nAChRs at the neuromuscular junction of Rana pipiens. Shows a weak inhibition on mammalian adult and fetal muscle nAChRs (alpha-1-beta-1-delta-epsilon/CHRNA1-CHRNB1-CHRND-CHRNE and alpha-1 beta-1 gamma delta/CHRNA1-CHRNB1-CHRNG-CHRND) (IC(50)=3-45 uM). In vivo, induces paralysis in goldfish (Carassius auratus) but not mice. The polypeptide is Conotoxin MIIIJ (Conus magus (Magical cone)).